The sequence spans 261 residues: Prostatic glandular kallikrein-6 (261 aa).

A signal peptide spans 1–18; sequence MWLLILFLILSLGWNDAA. Positions 19–24 are cleaved as a propeptide — activation peptide; sequence PPGQSR. One can recognise a Peptidase S1 domain in the interval 25-258; the sequence is IIGGFNCEKN…FTSWMKKVMK (234 aa). 5 disulfides stabilise this stretch: cysteine 31-cysteine 173, cysteine 50-cysteine 66, cysteine 152-cysteine 219, cysteine 184-cysteine 198, and cysteine 209-cysteine 234. Histidine 65 acts as the Charge relay system in catalysis. N-linked (GlcNAc...) asparagine glycosylation occurs at asparagine 108. Aspartate 120 functions as the Charge relay system in the catalytic mechanism. Serine 213 acts as the Charge relay system in catalysis.

It belongs to the peptidase S1 family. Kallikrein subfamily.

The catalysed reaction is Preferential cleavage of Arg-|-Xaa bonds in small molecule substrates. Highly selective action to release kallidin (lysyl-bradykinin) from kininogen involves hydrolysis of Met-|-Xaa or Leu-|-Xaa.. In terms of biological role, glandular kallikreins cleave Met-Lys and Arg-Ser bonds in kininogen to release Lys-bradykinin. The polypeptide is Prostatic glandular kallikrein-6 (Klk6) (Rattus norvegicus (Rat)).